A 251-amino-acid chain; its full sequence is Coproheme decarboxylase (251 aa).

Residues Arg133, 147–151, His174, Gln187, and Ser225 contribute to the Fe-coproporphyrin III site; that span reads YPMSK. The active site involves Tyr147.

This sequence belongs to the ChdC family. Type 1 subfamily. Requires Fe-coproporphyrin III as cofactor.

The enzyme catalyses Fe-coproporphyrin III + 2 H2O2 + 2 H(+) = heme b + 2 CO2 + 4 H2O. The catalysed reaction is Fe-coproporphyrin III + H2O2 + H(+) = harderoheme III + CO2 + 2 H2O. It catalyses the reaction harderoheme III + H2O2 + H(+) = heme b + CO2 + 2 H2O. It participates in porphyrin-containing compound metabolism; protoheme biosynthesis. Involved in coproporphyrin-dependent heme b biosynthesis. Catalyzes the decarboxylation of Fe-coproporphyrin III (coproheme) to heme b (protoheme IX), the last step of the pathway. The reaction occurs in a stepwise manner with a three-propionate intermediate. The protein is Coproheme decarboxylase of Listeria welshimeri serovar 6b (strain ATCC 35897 / DSM 20650 / CCUG 15529 / CIP 8149 / NCTC 11857 / SLCC 5334 / V8).